Here is a 299-residue protein sequence, read N- to C-terminus: Glycine--tRNA ligase alpha subunit (299 aa).

Belongs to the class-II aminoacyl-tRNA synthetase family. In terms of assembly, tetramer of two alpha and two beta subunits.

It is found in the cytoplasm. The enzyme catalyses tRNA(Gly) + glycine + ATP = glycyl-tRNA(Gly) + AMP + diphosphate. This chain is Glycine--tRNA ligase alpha subunit, found in Desulforapulum autotrophicum (strain ATCC 43914 / DSM 3382 / VKM B-1955 / HRM2) (Desulfobacterium autotrophicum).